The sequence spans 549 residues: MDVVEVAGSWWAQEREDIIMKYEKGHRAGLPEDKGPKPFRSYNNNVDHLGIVHETELPPLTAREAKQIRREISRKSKWVDMLGDWEKYKSSRKLIDRAYKGMPMNIRGPMWSVLLNIEEMKLKNPGRYQIMKEKGKRSSEHIQRIDRDISGTLRKHMFFRDRYGTKQRELLHILLAYEEYNPEVGYCRDLSHIAALFLLYLPEEDAFWALVQLLASERHSLQGFHSPNGGTVQGLQDQQEHVVATSQPKTMGHQDKKDLCGQCSPLGCLIRILIDGISLGLTLRLWDVYLVEGEQALMPITRIAFKVQQKRLTKTSRCGPWARFCNRFVDTWARDEDTVLKHLRASMKKLTRKQGDLPPPAKPEQGSSASRPVPASRGGKTLCKGDRQAPPGPPARFPRPIWSASPPRAPRSSTPCPGGAVREDTYPVGTQGVPSPALAQGGPQGSWRFLQWNSMPRLPTDLDVEGPWFRHYDFRQSCWVRAISQEDQLAPCWQAEHPAERVRSAFAAPSTDSDQGTPFRARDEQQCAPTSGPCLCGLHLESSQFPPGF.

In terms of domain architecture, Rab-GAP TBC spans 101–293; the sequence is GMPMNIRGPM…RLWDVYLVEG (193 aa). 2 S-palmitoyl cysteine lipidation sites follow: C318 and C325. 2 disordered regions span residues 350-443 and 507-526; these read LTRK…QGGP and AAPSTDSDQGTPFRARDEQQ. A compositionally biased stretch (low complexity) spans 398–417; it reads PRPIWSASPPRAPRSSTPCP.

Ubiquitinated by a CUL7-based E3 ligase, which leads to proteasomal degradation. In terms of processing, palmitoylation is required for membrane localization and protects TBC1D3 from ubiquitination.

The protein resides in the cell membrane. Acts as a GTPase activating protein for RAB5. Does not act on RAB4 or RAB11. The sequence is that of TBC1 domain family member 3G (TBC1D3G) from Homo sapiens (Human).